Here is a 291-residue protein sequence, read N- to C-terminus: tRNA U34 carboxymethyltransferase (291 aa).

Carboxy-S-adenosyl-L-methionine is bound by residues Lys-61, Trp-75, Lys-80, Gly-100, 122–124, Tyr-169, and Arg-284; that span reads DPS.

It belongs to the class I-like SAM-binding methyltransferase superfamily. CmoB family. Homotetramer.

The enzyme catalyses carboxy-S-adenosyl-L-methionine + 5-hydroxyuridine(34) in tRNA = 5-carboxymethoxyuridine(34) in tRNA + S-adenosyl-L-homocysteine + H(+). In terms of biological role, catalyzes carboxymethyl transfer from carboxy-S-adenosyl-L-methionine (Cx-SAM) to 5-hydroxyuridine (ho5U) to form 5-carboxymethoxyuridine (cmo5U) at position 34 in tRNAs. The polypeptide is tRNA U34 carboxymethyltransferase (Campylobacter lari (strain RM2100 / D67 / ATCC BAA-1060)).